Here is a 698-residue protein sequence, read N- to C-terminus: Serotransferrin (698 aa).

Residues 1 to 19 (MRFAVGALLACAALGLCLA) form the signal peptide. 2 Transferrin-like domains span residues 25 to 347 (VKWC…NQRE) and 360 to 683 (VKWC…NIRK). Disulfide bonds link cysteine 28–cysteine 67 and cysteine 38–cysteine 58. The residue at position 42 (arginine 42) is a Dimethylated arginine. The Fe(3+) site is built by aspartate 82 and tyrosine 114. Intrachain disulfides connect cysteine 137-cysteine 213, cysteine 156-cysteine 350, cysteine 177-cysteine 193, cysteine 180-cysteine 196, cysteine 190-cysteine 198, cysteine 246-cysteine 260, cysteine 363-cysteine 395, and cysteine 373-cysteine 386. Positions 139, 143, 145, and 146 each coordinate hydrogencarbonate. Position 207 (tyrosine 207) interacts with Fe(3+). Position 268 (histidine 268) interacts with Fe(3+). At serine 388 the chain carries Phosphoserine. Fe(3+)-binding residues include aspartate 410 and tyrosine 447. 8 disulfide bridges follow: cysteine 420-cysteine 693, cysteine 435-cysteine 656, cysteine 471-cysteine 542, cysteine 495-cysteine 684, cysteine 505-cysteine 519, cysteine 516-cysteine 525, cysteine 582-cysteine 596, and cysteine 634-cysteine 639. 4 residues coordinate hydrogencarbonate: threonine 473, arginine 477, alanine 479, and glycine 480. A glycan (N-linked (GlcNAc...) asparagine) is linked at asparagine 512. Tyrosine 536 lines the Fe(3+) pocket. Residue histidine 604 coordinates Fe(3+). A Phosphoserine modification is found at serine 685.

It belongs to the transferrin family. Monomer. Part of a complex composed of SLC40A1/ferroportin, TF/transferrin and HEPH/hephaestin that transfers iron from cells to transferrin. Expressed by the liver and secreted in plasma.

It localises to the secreted. Functionally, transferrins are iron binding transport proteins which can bind two Fe(3+) ions in association with the binding of an anion, usually bicarbonate. It is responsible for the transport of iron from sites of absorption and heme degradation to those of storage and utilization. Serum transferrin may also have a further role in stimulating cell proliferation. This chain is Serotransferrin (Tf), found in Rattus norvegicus (Rat).